The sequence spans 924 residues: Ubiquitin carboxyl-terminal hydrolase 15 (924 aa).

The Zn(2+) site is built by C130, C133, C141, C144, C150, C154, H163, and C167. Residues 130-167 (CARCFGPAKTRCSRCKSVRYCSGKCQIIHWRVAHKDEC) form an MYND-type zinc finger. Positions 226–236 (DITPQINTQGR) are enriched in polar residues. Disordered regions lie at residues 226 to 301 (DITP…VDSS) and 317 to 366 (SHKH…TSKK). Residues 247–256 (ANRESCRRDS) are compositionally biased toward basic and acidic residues. Polar residues predominate over residues 331 to 362 (GCPNTQYPSNGTRTATLPRTGINKSGEQSCTE). Residues 438–744 (RGLVNCGNSC…GAYMLFYMRS (307 aa)) form the USP domain. C447 (nucleophile) is an active-site residue. H703 (proton acceptor) is an active-site residue. The interval 750–793 (RGEHNGKAPVHHSQPRNEMKEQRKPVNRFKPRADHKNTESSSSE) is disordered. Over residues 764–773 (PRNEMKEQRK) the composition is skewed to basic and acidic residues.

The protein belongs to the peptidase C19 family. As to quaternary structure, interacts with DA1. As to expression, highly expressed in rosette leaves and inflorescence. Expressed at low levels in cotyledons, stems, cauline leaves and siliques.

Its subcellular location is the cytoplasm. The protein localises to the nucleus. The enzyme catalyses Thiol-dependent hydrolysis of ester, thioester, amide, peptide and isopeptide bonds formed by the C-terminal Gly of ubiquitin (a 76-residue protein attached to proteins as an intracellular targeting signal).. Recognizes and hydrolyzes the peptide bond at the C-terminal Gly of ubiquitin. Involved in the processing of poly-ubiquitin precursors as well as that of ubiquitinated proteins. Involved in the regulation of organ size. Acts as a positive regulator of cell proliferation. Possesses deubiquitinating enzyme activity in vitro. The enzyme activity of UBP15 is required for its function in regulation of cell proliferation. Functions antagonistically in a common pathway with DA1 to regulate seed size. Acts maternally to regulate seed size by promoting cell proliferation in the integuments of ovules and developing seeds. Functions independently of DA2 and BB. The protein is Ubiquitin carboxyl-terminal hydrolase 15 of Arabidopsis thaliana (Mouse-ear cress).